The sequence spans 423 residues: MVNQRVVHLCAKRSFSLTASMQKYFVDVYAKPDLVLTRGRGSRLFDDVNKREYIDFVAGIAVTSLGHSDPAIAEVIAAQSATLVHTSNLFHNSEALKFAEKLVESTKRFGGQQDAEKVYFCNSGTEANEAALKFSRRRALRTDPQKQGFIAFENSFHGRTMGSLSVTSKAKYRLPFGDMVPHVTFLNIHDPVEKLVSFIVENAPKTAAMILEPIQGEGGVHRVPEDKLVALGRLCKKHDIVLIYDEIQCGLGRTGKLWAHSNLPADAHPDIFTTAKALGNGFPMGATVVNSKVNEVLSVGDHGTTYGGNPLACAVGNHVLDRIAQQPFLDDVKAKANVFTAGLLALQKKYPFIREIRGDGLLIGVEFTVDVSDIISKSRERGLLITAAGPNTLRIIPALTIEEDTIRQGLEILESVVGEISSS.

Position 276 is an N6-(pyridoxal phosphate)lysine (lysine 276).

Belongs to the class-III pyridoxal-phosphate-dependent aminotransferase family. It depends on pyridoxal 5'-phosphate as a cofactor.

The protein resides in the mitochondrion matrix. The enzyme catalyses N(2)-acetyl-L-ornithine + 2-oxoglutarate = N-acetyl-L-glutamate 5-semialdehyde + L-glutamate. The protein operates within amino-acid biosynthesis; L-arginine biosynthesis; N(2)-acetyl-L-ornithine from L-glutamate: step 4/4. The chain is Acetylornithine aminotransferase, mitochondrial (ARG8) from Eremothecium gossypii (strain ATCC 10895 / CBS 109.51 / FGSC 9923 / NRRL Y-1056) (Yeast).